Here is a 216-residue protein sequence, read N- to C-terminus: Ras-related protein Rab-5C (216 aa).

Residues Ser-30, Ala-31, Gly-33, Lys-34, Ser-35, Ser-36, His-47, Glu-48, Thr-53, and Gly-79 each contribute to the GTP site. Ser-35 contributes to the Mg(2+) binding site. 2 short sequence motifs (switch) span residues 45-57 and 78-94; these read QFHE…IGAA and AGQE…YRGA. Thr-53 contributes to the Mg(2+) binding site. Position 85 is a phosphoserine; by LRRK2 (Ser-85). Asn-134, Lys-135, Asp-137, Ala-165, and Lys-166 together coordinate GTP. The interval 185–216 is disordered; that stretch reads NEPQNATGAPGRNRGVDLQENNPASRSQCCSN. Over residues 203–216 the composition is skewed to polar residues; that stretch reads QENNPASRSQCCSN. 2 S-geranylgeranyl cysteine lipidation sites follow: Cys-213 and Cys-214.

The protein belongs to the small GTPase superfamily. Rab family. In terms of assembly, interacts with EEA1. Interacts with INCA1. Interacts with GDI1, GDI2, CHML and CHM; phosphorylation at Ser-85 disrupts this interaction. Requires Mg(2+) as cofactor. Post-translationally, phosphorylation of Ser-85 in the switch II region by LRRK2 prevents the association of RAB regulatory proteins, including CHM, CHML and RAB GDP dissociation inhibitors GDI1 and GDI2. (Microbial infection) Glycosylated on arginine residues by S.typhimurium protein Ssek3.

The protein resides in the cell membrane. The protein localises to the early endosome membrane. It is found in the melanosome. It carries out the reaction GTP + H2O = GDP + phosphate + H(+). With respect to regulation, regulated by guanine nucleotide exchange factors (GEFs) which promote the exchange of bound GDP for free GTP. Regulated by GTPase activating proteins (GAPs) which increase the GTP hydrolysis activity. Inhibited by GDP dissociation inhibitors (GDIs). In terms of biological role, the small GTPases Rab are key regulators of intracellular membrane trafficking, from the formation of transport vesicles to their fusion with membranes. Rabs cycle between an inactive GDP-bound form and an active GTP-bound form that is able to recruit to membranes different sets of downstream effectors directly responsible for vesicle formation, movement, tethering and fusion. This is Ras-related protein Rab-5C from Homo sapiens (Human).